The chain runs to 284 residues: Capsid assembly scaffolding protein (284 aa).

Active-site residues include Asp19, His48, and Ser107. Positions 206 to 243 form a coiled coil; that stretch reads EAVTAVAEHVQEKLSATEQRLAEMETAFSALKQEVTDR. The disordered stretch occupies residues 258–284; sequence LDHTESLTQQRRSKATGGGGDALMTNC.

It belongs to the P2likevirus scaffolding protein family. As to quaternary structure, homomultimer. Autocleaves itself into an N-terminal fragment containing the protease activity, that remains in the capsid following maturation.

Its function is as follows. Scaffolding protein and protease involved in the icosahedric procapsid assembly. Coassembles with the capsid proteins to form the procapsid, in which the scaffolding protein is found within the external shell of icosahedrally arranged capsid protein subunits. In a subsequent step the scaffolding protein molecules are cleaved by the viral protease activity. This is Capsid assembly scaffolding protein (O) from Enterobacteriaceae (Bacteriophage P2).